Consider the following 746-residue polypeptide: MQAKKRYFILLSAGSCLALLFYFGGLQFRASRSHSRREEHSGRNGLHHPSPDHFWPRFPDALRPFVPWDQLENEDSSVHISPRQKRDANSSIYKGKKCRMESCFDFTLCKKNGFKVYAYPQQKGEKIAESYQNILAAIEGSRFYTSDPSQACLFVLSLDTLDRDQLSPQYVHNLRSKVQSLHLWNNGRNHLIFNLYSGTWPDYTEDVGFDIGQAMLAKASISTENFRPNFDVSIPLFSKDHPRTGGERGFLKFNTIPPLRKYMLVFKGKRYLTGIGSDTRNALYHVHNGEDVVLLTTCKHGKDWQKHKDSRCDRDNTEYEKYDYREMLHNATFCLVPRGRRLGSFRFLEALQAACVPVMLSNGWELPFSEVINWNQAAVIGDERLLLQIPSTIRSIHQDKILALRQQTQFLWEAYFSSVEKIVLTTLEIIQDRIFKHISRNSLIWNKHPGGLFVLPQYSSYLGDFPYYYANLGLKPPSKFTAVIHAVTPLVSQSQPVLKLLVAAAKSQYCAQIIVLWNCDKPLPAKHRWPATAVPVIVIEGESKVMSSRFLPYDNIITDAVLSLDEDTVLSTTEVDFAFTVWRSFPERIVGYPARSHFWDNSKERWGYTSKWTNDYSMVLTGAAIYHKYYHYLYSHYLPASLKNMVDQLANCEDILMNFLVSAVTKLPPIKVTQKEQYKETMMGQTSRASRWADPDHFAQRQSCMNTFASWFGYMPLIHSQMRLDPVLFKDQVSILRKKYRDIERL.

At 1-7 (MQAKKRY) the chain is on the cytoplasmic side. A helical; Signal-anchor for type II membrane protein transmembrane segment spans residues 8–28 (FILLSAGSCLALLFYFGGLQF). Topologically, residues 29 to 746 (RASRSHSRRE…RKKYRDIERL (718 aa)) are lumenal. Asn-89 carries N-linked (GlcNAc...) asparagine glycosylation. Intrachain disulfides connect Cys-98/Cys-103 and Cys-109/Cys-152. Residues Leu-166 and Tyr-203 each contribute to the a protein site. UDP contacts are provided by Lys-267, Lys-269, Tyr-271, and Arg-280. A disulfide bridge connects residues Cys-298 and Cys-312. His-300 contacts a protein. Residues Tyr-319 and Tyr-324 each contribute to the UDP site. N-linked (GlcNAc...) asparagine glycosylation is present at Asn-330. 2 disulfide bridges follow: Cys-334-Cys-355 and Cys-652-Cys-704. 2 residues coordinate UDP: Arg-346 and Glu-349.

The protein belongs to the glycosyltransferase 47 family. Part of the heparan sulfate polymerase, a dimeric complex composed of EXT1 and EXT2. Could also form homooligomeric complexes. Interacts with NDST1. N-glycosylated.

It is found in the golgi apparatus membrane. Its subcellular location is the golgi apparatus. It localises to the cis-Golgi network membrane. The protein resides in the endoplasmic reticulum membrane. The enzyme catalyses 3-O-{alpha-D-GlcNAc-[(1-&gt;4)-beta-D-GlcA-(1-&gt;4)-alpha-D-GlcNAc](n)-(1-&gt;4)-beta-D-GlcA-(1-&gt;3)-beta-D-Gal-(1-&gt;3)-beta-D-Gal-(1-&gt;4)-beta-D-Xyl}-L-seryl-[protein] + UDP-alpha-D-glucuronate = 3-O-{[(1-&gt;4)-beta-D-GlcA-(1-&gt;4)-alpha-D-GlcNAc](n+1)-(1-&gt;4)-beta-D-GlcA-(1-&gt;3)-beta-D-Gal-(1-&gt;3)-beta-D-Gal-(1-&gt;4)-beta-D-Xyl}-L-seryl-[protein] + UDP + H(+). The protein operates within protein modification; protein glycosylation. Functionally, glycosyltransferase forming with EXT2 the heterodimeric heparan sulfate polymerase which catalyzes the elongation of the heparan sulfate glycan backbone. Glycan backbone extension consists in the alternating transfer of (1-&gt;4)-beta-D-GlcA and (1-&gt;4)-alpha-D-GlcNAc residues from their respective UDP-sugar donors. Both EXT1 and EXT2 are required for the full activity of the polymerase since EXT1 bears the N-acetylglucosaminyl-proteoglycan 4-beta-glucuronosyltransferase activity within the complex while EXT2 carries the glucuronosyl-N-acetylglucosaminyl-proteoglycan 4-alpha-N-acetylglucosaminyltransferase activity. Heparan sulfate proteoglycans are ubiquitous components of the extracellular matrix and play an important role in tissue homeostasis and signaling. This Pongo abelii (Sumatran orangutan) protein is Exostosin-1 (EXT1).